Reading from the N-terminus, the 1258-residue chain is Structural polyprotein (1258 aa).

The host transcription inhibition stretch occupies residues 41–75 (PQAQQMQQLIAAVNTLAIRQNGTRTPGQQRRKRQP). Positions 59-114 (RQNGTRTPGQQRRKRQPNKPKRKQTPPKKQNPAKTKNKQKPQPPKPKKRKPGKRER) are disordered. Positions 68–109 (QQRRKRQPNKPKRKQTPPKKQNPAKTKNKQKPQPPKPKKRKP) match the Nuclear localization signal motif. Basic residues-rich tracts occupy residues 69–84 (QRRK…KQTP) and 93–114 (TKNK…KRER). The tract at residues 96–124 (KQKPQPPKPKKRKPGKRERKCMKIENDCI) is binding to the viral RNA. The tract at residues 109–123 (PGKRERKCMKIENDC) is ribosome-binding. An intrachain disulfide couples cysteine 123 to cysteine 138. Positions 123–271 (CIFEVKLEGK…RITPEGTEEW (149 aa)) constitute a Peptidase S3 domain. Histidine 149 functions as the Charge relay system in the catalytic mechanism. A Nuclear export signal motif is present at residues 154–164 (IDNPDLAKLAF). Residues 165-170 (KKSSKY) form an interaction with spike glycoprotein E2 region. Aspartate 171 acts as the Charge relay system in catalysis. The dimerization of the capsid protein stretch occupies residues 193 to 203 (PEGHYNWHHGA). Serine 223 serves as the catalytic Charge relay system. Residues 229-233 (DNKGR) are dimerization of the capsid protein. Residues 272–284 (TALVTTACILSNL) form a functions as an uncleaved signal peptide for the precursor of protein E3/E2 region. Disulfide bonds link cysteine 279-cysteine 288, cysteine 293-cysteine 297, cysteine 296-cysteine 328, cysteine 356-cysteine 462, cysteine 359-cysteine 365, cysteine 428-cysteine 442, cysteine 490-cysteine 601, cysteine 538-cysteine 562, and cysteine 540-cysteine 557. An N-linked (GlcNAc...) asparagine; by host glycan is attached at asparagine 283. The Extracellular portion of the chain corresponds to 338–696 (GLTEDYKAYK…PHEIFSYYYG (359 aa)). Interaction with host Mxra8 receptor regions lie at residues 363-366 (QFCY) and 399-401 (HSW). The segment at 521 to 524 (TGNK) is interaction with host Mxra8 receptor. N-linked (GlcNAc...) asparagine; by host glycosylation occurs at asparagine 537. Residues 553-559 (EFDNCEV) are interaction with host Mxra8 receptor. A glycan (N-linked (GlcNAc...) asparagine; by host) is linked at asparagine 598. Residues 697–717 (LYPATTVAVCVGLACVILLAL) traverse the membrane as a helical segment. Residues 718–758 (SASCCLCVSARNKCLTPYALTPGAVVPCTLSLLCCAPRAKA) lie on the Cytoplasmic side of the membrane. Residues 726–730 (SARNK) form an interaction with the capsid protein region. S-palmitoyl cysteine; by host attachment occurs at residues cysteine 731, cysteine 751, and cysteine 752. The transient transmembrane before p62-6K protein processing stretch occupies residues 731–751 (CLTPYALTPGAVVPCTLSLLC). A disulfide bridge links cysteine 731 with cysteine 752. The Extracellular segment spans residues 759 to 773 (ATFAETAAYLWAENQ). The chain crosses the membrane as a helical span at residues 774–794 (TVFWMQFAIPVACFMIVTYCL). Residues 795–796 (RH) are Cytoplasmic-facing. Residues 797–817 (LMLCCRTASFLVAVSLGMGAT) form a helical membrane-spanning segment. Extracellular segments follow at residues 818–819 (QA) and 820–1234 (YEHS…HTMG). 4 disulfide bridges follow: cysteine 868-cysteine 933, cysteine 881-cysteine 913, cysteine 882-cysteine 915, and cysteine 887-cysteine 897. The interval 903 to 920 (VYPFLWGGAYCFCDSENT) is E1 fusion peptide loop. N-linked (GlcNAc...) asparagine; by host glycans are attached at residues asparagine 960 and asparagine 1089. Intrachain disulfides connect cysteine 1078-cysteine 1090, cysteine 1120-cysteine 1195, cysteine 1125-cysteine 1199, and cysteine 1147-cysteine 1189. The chain crosses the membrane as a helical span at residues 1235 to 1255 (GATVVIAIGITIFLIVTCIAF). A lipid anchor (S-palmitoyl cysteine; by host) is attached at cysteine 1252. Residues 1256–1258 (SRH) are Cytoplasmic-facing.

As to quaternary structure, homodimer. Homomultimer. Interacts with host karyopherin KPNA4; this interaction allows the nuclear import of the viral capsid protein. Interacts with spike glycoprotein E2. Interacts with host IRAK1; the interaction leads to inhibition of IRAK1-dependent signaling. The precursor of protein E3/E2 and E1 form a heterodimer shortly after synthesis. In terms of assembly, the precursor of protein E3/E2 and E1 form a heterodimer shortly after synthesis. Processing of the precursor of protein E3/E2 into E2 and E3 results in a heterodimer of the spike glycoproteins E2 and E1. Spike at virion surface are constituted of a trimer of E2-E1 heterodimers. After target cell attachment and endocytosis, E1 change conformation to form homotrimers. Interacts with 6K protein. As to quaternary structure, interacts with spike glycoprotein E1. Processing of the precursor of protein E3/E2 into E2 and E3 results in a heterodimer of the spike glycoproteins E2 and E1. Spike at virion surface are constituted of a trimer of E2-E1 heterodimers. Interacts with 6K protein. Interacts with host MXRA8; this interaction mediates virus entry. Oligomer. Interacts with spike glycoprotein E1. Interacts with spike glycoprotein E2. Post-translationally, structural polyprotein: Specific enzymatic cleavages in vivo yield mature proteins. Capsid protein is auto-cleaved during polyprotein translation, unmasking a signal peptide at the N-terminus of the precursor of E3/E2. The remaining polyprotein is then targeted to the host endoplasmic reticulum, where host signal peptidase cleaves it into pE2, 6K and E1 proteins. pE2 is further processed to mature E3 and E2 by host furin in trans-Golgi vesicle. Palmitoylated via thioester bonds. These palmitoylations may induce disruption of the C-terminus transmembrane. This would result in the reorientation of E2 C-terminus from lumenal to cytoplasmic side. In terms of processing, N-glycosylated. Post-translationally, palmitoylated via thioester bonds.

Its subcellular location is the virion. It is found in the host cytoplasm. The protein localises to the host cell membrane. The protein resides in the host nucleus. It localises to the virion membrane. Its subcellular location is the host Golgi apparatus. It is found in the host trans-Golgi network. The protein localises to the host endoplasmic reticulum. The enzyme catalyses Autocatalytic release of the core protein from the N-terminus of the togavirus structural polyprotein by hydrolysis of a -Trp-|-Ser- bond.. Forms an icosahedral capsid with a T=4 symmetry composed of 240 copies of the capsid protein surrounded by a lipid membrane through which penetrate 80 spikes composed of trimers of E1-E2 heterodimers. The capsid protein binds to the viral RNA genome at a site adjacent to a ribosome binding site for viral genome translation following genome release. Possesses a protease activity that results in its autocatalytic cleavage from the nascent structural protein. Following its self-cleavage, the capsid protein transiently associates with ribosomes, and within several minutes the protein binds to viral RNA and rapidly assembles into icosahedric core particles. The resulting nucleocapsid eventually associates with the cytoplasmic domain of the spike glycoprotein E2 at the cell membrane, leading to budding and formation of mature virions. In case of infection, new virions attach to target cells and after clathrin-mediated endocytosis their membrane fuses with the host endosomal membrane. This leads to the release of the nucleocapsid into the cytoplasm, followed by an uncoating event necessary for the genomic RNA to become accessible. The uncoating might be triggered by the interaction of capsid proteins with ribosomes. Binding of ribosomes would release the genomic RNA since the same region is genomic RNA-binding and ribosome-binding. Specifically inhibits interleukin-1 receptor-associated kinase 1/IRAK1-dependent signaling during viral entry, representing a means by which the alphaviruses may evade innate immune detection and activation prior to viral gene expression. Functionally, provides the signal sequence for the translocation of the precursor of protein E3/E2 to the host endoplasmic reticulum. Furin-cleaved E3 remains associated with spike glycoprotein E1 and mediates pH protection of the latter during the transport via the secretory pathway. After virion release from the host cell, the assembly protein E3 is gradually released in the extracellular space. In terms of biological role, plays a role in viral attachment to target host cell, by binding to the cell receptor MXRA8. Synthesized as a p62 precursor which is processed by furin at the cell membrane just before virion budding, giving rise to E2-E1 heterodimer. The p62-E1 heterodimer is stable, whereas E2-E1 is unstable and dissociate at low pH. p62 is processed at the last step, presumably to avoid E1 fusion activation before its final export to cell surface. E2 C-terminus contains a transitory transmembrane that would be disrupted by palmitoylation, resulting in reorientation of the C-terminal tail from lumenal to cytoplasmic side. This step is critical since E2 C-terminus is involved in budding by interacting with capsid proteins. This release of E2 C-terminus in cytoplasm occurs lately in protein export, and precludes premature assembly of particles at the endoplasmic reticulum membrane. Its function is as follows. Acts as a viroporin that participates in virus glycoprotein processing and transport to the plasma membrane, cell permeabilization and budding of viral particles. Disrupts the calcium homeostasis of the cell, probably at the endoplasmic reticulum level. This leads to cytoplasmic calcium elevation. Because of its lipophilic properties, the 6K protein is postulated to influence the selection of lipids that interact with the transmembrane domains of the glycoproteins, which, in turn, affects the deformability of the bilayer required for the extreme curvature that occurs as budding proceeds. Present in low amount in virions, about 3% compared to viral glycoproteins. Class II viral fusion protein. Fusion activity is inactive as long as E1 is bound to E2 in mature virion. After virus attachment to target cell and endocytosis, acidification of the endosome induce dissociation of E1/E2 heterodimer and concomitant trimerization of the E1 subunits. This E1 trimer is fusion active, and promotes release of viral nucleocapsid in cytoplasm after endosome and viral membrane fusion. Efficient fusion requires the presence of cholesterol and sphingolipid in the target membrane. This is Structural polyprotein from Middelburg virus.